Here is a 470-residue protein sequence, read N- to C-terminus: Zinc finger and BTB domain-containing protein 8A.1-A (470 aa).

The BTB domain maps to 24–92 (CDCHIIVEGQ…VYSGKLPLSG (69 aa)). The interval 260–280 (EDEDAASHSWPESPQQESLDQ) is disordered. Residues 269–278 (WPESPQQESL) are compositionally biased toward polar residues. 2 C2H2-type zinc fingers span residues 316-338 (FKCP…LRCH) and 344-367 (YPCE…QTIH). The span at 439 to 450 (GRKENGSERAES) shows a compositional bias: basic and acidic residues. The segment at 439–470 (GRKENGSERAESDLAIQEVVDSEDDELKEKQD) is disordered.

The protein localises to the nucleus. Functionally, may be involved in transcriptional regulation. The protein is Zinc finger and BTB domain-containing protein 8A.1-A (zbtb8a.1-a) of Xenopus laevis (African clawed frog).